The primary structure comprises 217 residues: Transmembrane protein 247 (217 aa).

Positions 1–10 are enriched in basic and acidic residues; it reads MATEDREMME. Residues 1–87 are disordered; the sequence is MATEDREMME…GPATTKGQAG (87 aa). The stretch at 109–154 forms a coiled coil; it reads RERDAEMELEKVRMEFELKRLKYLHEENERQRQHEEVMEQLQQQAT. The next 2 membrane-spanning stretches (helical) occupy residues 165-185 and 192-212; these read LLLP…IHII and IFFL…LCLI.

Its subcellular location is the membrane. This is Transmembrane protein 247 from Bos taurus (Bovine).